We begin with the raw amino-acid sequence, 839 residues long: MRRQVKKVLREKADDSMKPGWDVYQPSNDVVYAFNHYMQGSQIDAEAREKAEKAFQEAVKKHPFHNNADHTVDFHGTTVFRNAKGKVCGVLIPKALPSFATSMAADVLECAVARTSLRSALFGGVSPNSGIAGYFDYRGTPVELKCRKTSFTYEHTKEWRSVFPMIDYTSAIYKAALPDHWKAQDAAVPDVVRIHGSPFSTLTVNERFRTASHTDNGDFDNGYGVLAVLKGEYSGLSLALDDYGVCFNMQPTDVLLFDTHLFHSNTELEAKEANATWNRLSCVFYYRAALGEQPCVEEYRRRLKKAKEEKSTSLSFNHIEQKDNGENTNKPAPVYPVSLTPFSCAASAWALRGCAAAMLTRLHGLVRENASLMTELFGEPVEVADGLPRRAPEEIIPVHKHTNVQMHYLGGFSEKGDILNEAMNKRHYLDKENLQKMFGEEFVNIWTQSRTHWLQLVKKEWEHQKETNPTRTRFSWNNTSAMNFAFFDLCDVAKQLMCGAFGDREVNKKEEQSFWGMFAAHLDNACINEIGMLQGSMGMHKLNVKLKDYNFGGTRYLKDMPPEEQERRRRRRLEIEQARRRAPICDSESGDWLRNEAFDYQTEDVAVNYEREQWITPENNAKRFGFPERGVYGAEGAATGTISVLIVLPKPTNHRQKTCELPTSREADRIMKNPAAQRLLCAKPCNIGLSTSSNKSRTVLCGNIRIDKVFDGGSVGGKMYDFVIMRHLLAATTGEREPLECLVRWTSLARYCTFVVEVDLLDRHHYILKSEIGEEYSAVSEICFSALYSATYARDKVNLRTTPCLLSFIDKSGNMLESRFKFNGSPLNTVAFVVRRREK.

Residues 86 to 288 are thymine dioxygenase; that stretch reads KVCGVLIPKA…RLSCVFYYRA (203 aa). His213, Asp215, and His263 together coordinate Fe cation. Residue Arg279 participates in 2-oxoglutarate binding. A DNA-binding JBP1 domain region spans residues 415–583; the sequence is KGDILNEAMN…EIEQARRRAP (169 aa).

This sequence belongs to the TET family. JBP1 subfamily. As to quaternary structure, monomer. Binds to DNA as a monomer. Requires Fe(2+) as cofactor.

The protein localises to the nucleus. It catalyses the reaction thymine + 2-oxoglutarate + O2 = 5-hydroxymethyluracil + succinate + CO2. Functionally, dioxygenase that catalyzes the first step of DNA base J (beta-d-glucosyl-HOMedU) biosynthesis by converting thymine to 5-hydroxymethyluracil (HOMedU). DNA base J is a hypermodified thymidine residue found in the genome of kinetoplastid parasites, which is localized primarily to repetitive DNA, namely the telomeres, and is implicated in the regulation of antigenic variation. Also specifically binds to base J-containing DNA (J-DNA). Involved in propagation and maintenance of DNA base J synthesis initiated by JBP2 by specifically binding already synthesized DNA base J and propagating J synthesis. Thymine dioxygenase activity and J-DNA-binding are independent functions. The chain is Thymine dioxygenase JBP1 (JBP1) from Trypanosoma brucei brucei (strain 927/4 GUTat10.1).